A 421-amino-acid polypeptide reads, in one-letter code: Imidazolonepropionase (421 aa).

Fe(3+)-binding residues include histidine 81 and histidine 83. Positions 81 and 83 each coordinate Zn(2+). 3 residues coordinate 4-imidazolone-5-propanoate: arginine 90, tyrosine 153, and histidine 186. Tyrosine 153 serves as a coordination point for N-formimidoyl-L-glutamate. Fe(3+) is bound at residue histidine 251. Residue histidine 251 participates in Zn(2+) binding. A 4-imidazolone-5-propanoate-binding site is contributed by glutamate 254. Aspartate 326 contacts Fe(3+). Aspartate 326 provides a ligand contact to Zn(2+). The N-formimidoyl-L-glutamate site is built by asparagine 328 and glycine 330. Serine 331 serves as a coordination point for 4-imidazolone-5-propanoate.

Belongs to the metallo-dependent hydrolases superfamily. HutI family. Zn(2+) serves as cofactor. Requires Fe(3+) as cofactor.

The protein resides in the cytoplasm. It catalyses the reaction 4-imidazolone-5-propanoate + H2O = N-formimidoyl-L-glutamate. The protein operates within amino-acid degradation; L-histidine degradation into L-glutamate; N-formimidoyl-L-glutamate from L-histidine: step 3/3. In terms of biological role, catalyzes the hydrolytic cleavage of the carbon-nitrogen bond in imidazolone-5-propanoate to yield N-formimidoyl-L-glutamate. It is the third step in the universal histidine degradation pathway. The chain is Imidazolonepropionase from Streptococcus sanguinis (strain SK36).